A 103-amino-acid chain; its full sequence is Large ribosomal subunit protein bL21 (103 aa).

This sequence belongs to the bacterial ribosomal protein bL21 family. In terms of assembly, part of the 50S ribosomal subunit. Contacts protein L20.

Functionally, this protein binds to 23S rRNA in the presence of protein L20. The chain is Large ribosomal subunit protein bL21 from Azoarcus sp. (strain BH72).